Reading from the N-terminus, the 148-residue chain is MKLDLKILDARMRDYLPAYATTGSAGLDLRACLDAPVTLQPGETTLVPTGLAIHLADPGYAALILPRSGLGHKHGIVLGNLVGLIDSDYQGQLMVSTWNRGQTEFVLNPFERLAQLVIVPVVQAQFNIVDEFTESDRGEGGFGSTGRH.

Residues 67-69 (RSG), Asn-80, 84-86 (LID), and Met-94 contribute to the substrate site.

Belongs to the dUTPase family. It depends on Mg(2+) as a cofactor.

It carries out the reaction dUTP + H2O = dUMP + diphosphate + H(+). The protein operates within pyrimidine metabolism; dUMP biosynthesis; dUMP from dCTP (dUTP route): step 2/2. This enzyme is involved in nucleotide metabolism: it produces dUMP, the immediate precursor of thymidine nucleotides and it decreases the intracellular concentration of dUTP so that uracil cannot be incorporated into DNA. In Burkholderia cenocepacia (strain ATCC BAA-245 / DSM 16553 / LMG 16656 / NCTC 13227 / J2315 / CF5610) (Burkholderia cepacia (strain J2315)), this protein is Deoxyuridine 5'-triphosphate nucleotidohydrolase.